A 253-amino-acid chain; its full sequence is Flap endonuclease Xni (253 aa).

A Mg(2+)-binding site is contributed by Asp104. Residues 160 to 250 (VAPQQLTDFW…HGNLQQLRLN (91 aa)) enclose the 5'-3' exonuclease domain. Leu171, Ala172, Pro180, Ile182, and Ile185 together coordinate K(+). Residues 184–189 (GIGAKT) form an interaction with DNA region.

This sequence belongs to the Xni family. The cofactor is Mg(2+). It depends on K(+) as a cofactor.

Its function is as follows. Has flap endonuclease activity. During DNA replication, flap endonucleases cleave the 5'-overhanging flap structure that is generated by displacement synthesis when DNA polymerase encounters the 5'-end of a downstream Okazaki fragment. The chain is Flap endonuclease Xni from Edwardsiella ictaluri (strain 93-146).